The primary structure comprises 249 residues: Chromosome-partitioning ATPase Soj (249 aa).

Residues Lys15, Gly16, Gly17, Val18, Gly19, Lys20, Thr21, Thr22, Pro207, and Asn209 each coordinate ATP. Gly17 serves as a coordination point for ADP. Residues Gly19, Lys20, Thr21, Thr22, Pro207, and Asn209 each coordinate ADP. Position 21 (Thr21) interacts with Mg(2+).

It belongs to the ParA family. In terms of assembly, monomer in the absence of nucleotides or presence of ADP, in the presence of ATP is found in a monomer-dimer equilibrium. ATP-binding is required for DNA-binding. Probably interacts with Spo0J.

It catalyses the reaction ATP + H2O = ADP + phosphate + H(+). ATPase activity is stimulated 10-fold in the presence of Spo0J and parS DNA (a plasmid centromere-like site or plasmid DNA itself). The first 20 residues of Spo0J stimulate its ATPase activity by 8%. Its function is as follows. ATPase probably involved in chromosome partitioning. Cooperatively binds dsDNA, forming nucleoprotein filaments in a strictly ATP-dependent fashion. Can also bind ssDNA with lower affinity. This is Chromosome-partitioning ATPase Soj from Thermus thermophilus (strain ATCC BAA-163 / DSM 7039 / HB27).